The following is a 250-amino-acid chain: mRNA-decapping protein g5R (250 aa).

One can recognise a Nudix hydrolase domain in the interval 97 to 243 (QKFRKNWLLP…IIGPAFNFIK (147 aa)). A Nudix box motif is present at residues 132-153 (GKPKEDESDLTCAIREFEEETG). Residue glutamate 138 coordinates Mg(2+). Residue glutamate 147 is the Nucleophile of the active site. Positions 151 and 173 each coordinate Mg(2+).

Belongs to the Nudix hydrolase family. DIPP subfamily. In terms of assembly, interacts with host RPL23A. The cofactor is Mg(2+). Mn(2+) serves as cofactor.

It is found in the host rough endoplasmic reticulum. The catalysed reaction is diphospho-myo-inositol polyphosphate + H2O = myo-inositol polyphosphate + phosphate.. In terms of biological role, decapping enzyme required for the removal of the 5'-end m7GpppN cap tethered to viral and host mRNAs to allow their decay in cells. May therefore accelerate viral and cellular mRNA turnover to eliminate competing host mRNAs and allow stage-specific synthesis of viral proteins. Acceleration of the turnover of cellular transcripts may even promote the shutoff of host protein synthesis. In addition to the mRNA cap, g5R also efficiently hydrolyzes diphosphoinositol polyphosphates. Down-regulation of the level of PP-InsP5 (diphosphoinositol pentakisphosphate) may play a role in viral manipulation of the cellular secretory pathway, a step necessary for the formation of virions. Binds viral and cellular poly(A) mRNAs, thereby decreasing both types of mRNAs. This African swine fever virus (isolate Tick/South Africa/Pretoriuskop Pr4/1996) (ASFV) protein is mRNA-decapping protein g5R.